The chain runs to 360 residues: Phosphoserine aminotransferase (360 aa).

R42 provides a ligand contact to L-glutamate. Pyridoxal 5'-phosphate contacts are provided by residues A76–R77, W102, T153, D172, and Q195. N6-(pyridoxal phosphate)lysine is present on K196. A pyridoxal 5'-phosphate-binding site is contributed by N237–T238.

This sequence belongs to the class-V pyridoxal-phosphate-dependent aminotransferase family. SerC subfamily. Homodimer. The cofactor is pyridoxal 5'-phosphate.

It is found in the cytoplasm. It carries out the reaction O-phospho-L-serine + 2-oxoglutarate = 3-phosphooxypyruvate + L-glutamate. The catalysed reaction is 4-(phosphooxy)-L-threonine + 2-oxoglutarate = (R)-3-hydroxy-2-oxo-4-phosphooxybutanoate + L-glutamate. It participates in amino-acid biosynthesis; L-serine biosynthesis; L-serine from 3-phospho-D-glycerate: step 2/3. The protein operates within cofactor biosynthesis; pyridoxine 5'-phosphate biosynthesis; pyridoxine 5'-phosphate from D-erythrose 4-phosphate: step 3/5. In terms of biological role, catalyzes the reversible conversion of 3-phosphohydroxypyruvate to phosphoserine and of 3-hydroxy-2-oxo-4-phosphonooxybutanoate to phosphohydroxythreonine. In Aliivibrio fischeri (strain ATCC 700601 / ES114) (Vibrio fischeri), this protein is Phosphoserine aminotransferase.